The chain runs to 485 residues: ATP-dependent 6-phosphofructokinase (485 aa).

Residues G105, 171-172, and 196-199 each bind ATP; these read RG and GDGT. D197 contacts Mg(2+). Substrate-binding positions include 225 to 227, 270 to 272, E323, and 378 to 381; these read TID, MGR, and YMIR. D227 (proton acceptor) is an active-site residue. Positions 483 to 485 match the Peroxisomal targeting signal motif; that stretch reads SKL.

Belongs to the phosphofructokinase type A (PFKA) family. PPi-dependent PFK group II subfamily. Atypical ATP-dependent clade 'X' sub-subfamily. Homotetramer. Mg(2+) is required as a cofactor.

It is found in the glycosome. It catalyses the reaction beta-D-fructose 6-phosphate + ATP = beta-D-fructose 1,6-bisphosphate + ADP + H(+). The protein operates within carbohydrate degradation; glycolysis; D-glyceraldehyde 3-phosphate and glycerone phosphate from D-glucose: step 3/4. With respect to regulation, allosterically activated by AMP. Catalyzes the phosphorylation of D-fructose 6-phosphate to fructose 1,6-bisphosphate by ATP, the first committing step of glycolysis. The polypeptide is ATP-dependent 6-phosphofructokinase (Trypanosoma cruzi (strain CL Brener)).